Consider the following 86-residue polypeptide: Large ribosomal subunit protein bL27 (86 aa).

It belongs to the bacterial ribosomal protein bL27 family.

The sequence is that of Large ribosomal subunit protein bL27 from Xanthomonas oryzae pv. oryzae (strain PXO99A).